A 638-amino-acid chain; its full sequence is CTTNBP2 N-terminal-like protein (638 aa).

Residues 87 to 284 (MKQCKNMQER…KDLEAAQQHR (198 aa)) adopt a coiled-coil conformation. Disordered stretches follow at residues 280–303 (AQQHRSTSEQGREPVTMSRGTATE), 360–430 (RELT…PCSS), 463–490 (RHKFQSQADQDQQASGLQSPPSRDLSPT), and 514–621 (NQGP…CSPS). A Phosphoserine modification is found at S285. Polar residues predominate over residues 360–371 (RELTSDSSTENQ). Composition is skewed to low complexity over residues 401–430 (TMPSHLPSSGSSLSPSSTASSSLTSSPCSS) and 467–477 (QSQADQDQQAS). A phosphoserine mark is found at S481, S488, S522, S526, S559, S562, and S567. Polar residues predominate over residues 514-528 (NQGPIKPVSPNSSPF). A phosphothreonine mark is found at T569 and T589. Residues 589-620 (TPSQSATTPVTKTHSQASSLAATEDLASSCSP) are compositionally biased toward polar residues. The residue at position 591 (S591) is a Phosphoserine.

Interacts with CTTN/cortactin; this interaction may redistribute CTTN to stress fibers. May form homomers. Associates with the core of STRIPAK complexes composed of PP2A catalytic and scaffolding subunits, the striatins (PP2A regulatory subunits), the striatin-associated proteins MOB4, STRIP1 and STRIP2, PDCD10 and members of the STE20 kinases, such as STK24 and STK26. In terms of tissue distribution, predominantly expressed in skin, also detectable in spleen and lung (at protein level). Very low levels, if any, in brain (at protein level).

It localises to the cell projection. Its subcellular location is the lamellipodium. It is found in the cytoplasm. The protein localises to the cytoskeleton. The protein resides in the stress fiber. Functionally, regulates lamellipodial actin dynamics in a CTTN-dependent manner. Associates with core striatin-interacting phosphatase and kinase (STRIPAK) complex to form CTTNBP2NL-STRIPAK complexes. STRIPAK complexes have critical roles in protein (de)phosphorylation and are regulators of multiple signaling pathways including Hippo, MAPK, nuclear receptor and cytoskeleton remodeling. Different types of STRIPAK complexes are involved in a variety of biological processes such as cell growth, differentiation, apoptosis, metabolism and immune regulation. This is CTTNBP2 N-terminal-like protein (Cttnbp2nl) from Mus musculus (Mouse).